The following is a 362-amino-acid chain: Mortality factor 4-like protein 1 (362 aa).

The Tudor-knot domain occupies 12-51 (QEGERVLCFHGPLLYEAKCVKVAIKDKQVKYFIHYSGWNK). The tract at residues 26-62 (YEAKCVKVAIKDKQVKYFIHYSGWNKKSAVRPRRSEK) is interaction with KAT8. The tract at residues 113 to 182 (RELQKANQEQ…RKKRARVDPT (70 aa)) is disordered. A sufficient for interaction with SIN3A region spans residues 133–266 (PGKKTSGLQQ…VAGIKEYFNV (134 aa)). Residues 135–146 (KKTSGLQQKNVE) carry the Nuclear localization signal motif. An N6-acetyllysine modification is found at Lys143. The segment at 164 to 230 (STSETPQPPR…FYLPAKKNVD (67 aa)) is interaction with RB1-1. The sufficient for interaction with PHF12 stretch occupies residues 188–342 (TFMNRVEVKV…FLKYLAKNSA (155 aa)). An MRG domain is found at 191 to 362 (NRVEVKVKIP…APPEYHRKAV (172 aa)). The interaction with RB1-2 stretch occupies residues 323–344 (LALLLNYLHDFLKYLAKNSATL).

As to quaternary structure, component of the NuA4 histone acetyltransferase complex which contains the catalytic subunit KAT5/TIP60 and the subunits EP400, TRRAP/PAF400, BRD8/SMAP, EPC1, DMAP1/DNMAP1, RUVBL1/TIP49, RUVBL2, ING3, actin, ACTL6A/BAF53A, MORF4L1/MRG15, MORF4L2/MRGX, MRGBP, YEATS4/GAS41, VPS72/YL1 and MEAF6. The NuA4 complex interacts with MYC and the adenovirus E1A protein. MORF4L1 may also participate in the formation of NuA4 related complexes which lack the KAT5/TIP60 catalytic subunit, but which include the SWI/SNF related protein SRCAP. Component of the mSin3A histone deacetylase complex, which includes SIN3A, HDAC2, ARID4B, MORF4L1, RBBP4/RbAp48, and RBBP7/RbAp46. May also interact with PHF12 and one or more as yet undefined members of the TLE (transducin-like enhancer of split) family of transcriptional repressors. Component of the SIN3B complex, which includes SIN3B, HDAC2 or HDAC1, PHF12 and MORF4L1. Interacts with RB1 and KAT8. Interacts with the N-terminus of MRFAP1. Found in a complex composed of MORF4L1, MRFAP1 and RB1. Interacts with the entire BRCA complex, which contains BRCA1, PALB2, BRCA2 and RAD51. Interacts with PALB2. Forms a complex with MSL1 and NUPR1.

It localises to the nucleus. Its function is as follows. Component of the NuA4 histone acetyltransferase (HAT) complex which is involved in transcriptional activation of select genes principally by acetylation of nucleosomal histones H4 and H2A. This modification may both alter nucleosome - DNA interactions and promote interaction of the modified histones with other proteins which positively regulate transcription. This complex may be required for the activation of transcriptional programs associated with oncogene and proto-oncogene mediated growth induction, tumor suppressor mediated growth arrest and replicative senescence, apoptosis, and DNA repair. The NuA4 complex ATPase and helicase activities seem to be, at least in part, contributed by the association of RUVBL1 and RUVBL2 with EP400. NuA4 may also play a direct role in DNA repair when directly recruited to sites of DNA damage. As part of the SIN3B complex represses transcription and counteracts the histone acetyltransferase activity of EP300 through the recognition H3K27ac marks by PHF12 and the activity of the histone deacetylase HDAC2. SIN3B complex is recruited downstream of the constitutively active genes transcriptional start sites through interaction with histones and mitigates histone acetylation and RNA polymerase II progression within transcribed regions contributing to the regulation of transcription. Required for homologous recombination repair (HRR) and resistance to mitomycin C (MMC). Involved in the localization of PALB2, BRCA2 and RAD51, but not BRCA1, to DNA-damage foci. The polypeptide is Mortality factor 4-like protein 1 (Morf4l1) (Mus musculus (Mouse)).